Reading from the N-terminus, the 203-residue chain is MSLYYTLVFAILVVEIFMFSILALPIPSRYRRPLTLLLLKPFKSSTVQVAIKCVLGFILLLFIDCINRVYSIDKELQLSSASQNNGAIIAQDRIEVLSRKFFAQRNMYLTGITLFLTFVVVRTFGLVIELLTMKDIYRASPPVASSDVKKNDSVTAEAAAQSGASKDDHGDEKNFELLKKIQDIDDEIARLKEKSESLQEEIN.

The Lumenal segment spans residues 1–6 (MSLYYT). The chain crosses the membrane as a helical span at residues 7-27 (LVFAILVVEIFMFSILALPIP). At 28-45 (SRYRRPLTLLLLKPFKSS) the chain is on the cytoplasmic side. A helical membrane pass occupies residues 46 to 66 (TVQVAIKCVLGFILLLFIDCI). The Lumenal segment spans residues 67–110 (NRVYSIDKELQLSSASQNNGAIIAQDRIEVLSRKFFAQRNMYLT). Residues 111–131 (GITLFLTFVVVRTFGLVIELL) form a helical membrane-spanning segment. Residues 132–203 (TMKDIYRASP…KSESLQEEIN (72 aa)) are Cytoplasmic-facing. The segment at 142 to 171 (PVASSDVKKNDSVTAEAAAQSGASKDDHGD) is disordered.

Belongs to the BCAP29/BCAP31 family.

It is found in the endoplasmic reticulum membrane. Its function is as follows. May play a role in anterograde transport of membrane proteins from the endoplasmic reticulum to the Golgi. May be involved in invertase secretion. This chain is Endoplasmic reticulum transmembrane protein 3 (YET3), found in Saccharomyces cerevisiae (strain ATCC 204508 / S288c) (Baker's yeast).